Consider the following 178-residue polypeptide: Large ribosomal subunit protein bL19 (178 aa).

This sequence belongs to the bacterial ribosomal protein bL19 family.

Its function is as follows. This protein is located at the 30S-50S ribosomal subunit interface and may play a role in the structure and function of the aminoacyl-tRNA binding site. This Rhizobium etli (strain ATCC 51251 / DSM 11541 / JCM 21823 / NBRC 15573 / CFN 42) protein is Large ribosomal subunit protein bL19.